The following is a 440-amino-acid chain: 23S rRNA (uracil(1939)-C(5))-methyltransferase RlmD (440 aa).

In terms of domain architecture, TRAM spans 10–68 (KSTQPQRIEFTVDSLDHHCVGIGRHQGKAIFIEGALPGELVKARILEDKKQYAHAALQQ). Residues Cys81, Cys87, Cys90, and Cys169 each coordinate [4Fe-4S] cluster. Residues Gln273, Phe302, Asn307, Glu323, Asp350, and Asp371 each contribute to the S-adenosyl-L-methionine site. Cys397 (nucleophile) is an active-site residue.

The protein belongs to the class I-like SAM-binding methyltransferase superfamily. RNA M5U methyltransferase family. RlmD subfamily.

It catalyses the reaction uridine(1939) in 23S rRNA + S-adenosyl-L-methionine = 5-methyluridine(1939) in 23S rRNA + S-adenosyl-L-homocysteine + H(+). Functionally, catalyzes the formation of 5-methyl-uridine at position 1939 (m5U1939) in 23S rRNA. The chain is 23S rRNA (uracil(1939)-C(5))-methyltransferase RlmD from Aeromonas hydrophila subsp. hydrophila (strain ATCC 7966 / DSM 30187 / BCRC 13018 / CCUG 14551 / JCM 1027 / KCTC 2358 / NCIMB 9240 / NCTC 8049).